The sequence spans 454 residues: Histidine--tRNA ligase (454 aa).

The protein belongs to the class-II aminoacyl-tRNA synthetase family. Homodimer.

The protein localises to the cytoplasm. The enzyme catalyses tRNA(His) + L-histidine + ATP = L-histidyl-tRNA(His) + AMP + diphosphate + H(+). The protein is Histidine--tRNA ligase of Phocaeicola vulgatus (strain ATCC 8482 / DSM 1447 / JCM 5826 / CCUG 4940 / NBRC 14291 / NCTC 11154) (Bacteroides vulgatus).